The primary structure comprises 1356 residues: Vascular endothelial growth factor receptor 2 (1356 aa).

Residues Met1–Ala19 form the signal peptide. Residues Ala20–Glu764 are Extracellular-facing. N-linked (GlcNAc...) asparagine glycosylation is found at Asn46, Asn66, Asn96, Asn143, Asn158, and Asn245. Ig-like C2-type domains lie at Asn46–Leu110, Asn141–Glu207, Tyr224–Thr320, Pro328–Ser414, Pro421–Thr548, Pro551–Thr660, and Pro667–Ile753. Cysteines 53 and 103 form a disulfide. Cys150 and Cys200 are disulfide-bonded. Cys246 and Cys307 are oxidised to a cystine. N-linked (GlcNAc...) asparagine glycosylation is found at Asn318, Asn374, Asn395, Asn511, Asn523, Asn580, Asn613, Asn619, Asn631, Asn675, Asn704, and Asn721. Cystine bridges form between Cys445–Cys530 and Cys571–Cys642. An intrachain disulfide couples Cys688 to Cys737. Residues Ile765–Ile785 form a helical membrane-spanning segment. Over Leu786–Val1356 the chain is Cytoplasmic. The residue at position 801 (Tyr801) is a Phosphotyrosine. Residues Leu834 to Asn1162 enclose the Protein kinase domain. Residues Leu840–Val848 and Lys868 contribute to the ATP site. The residue at position 951 (Tyr951) is a Phosphotyrosine; by autocatalysis. A phosphoserine mark is found at Ser982 and Ser984. Tyr996 carries the post-translational modification Phosphotyrosine; by autocatalysis. Residues Cys1024 and Cys1045 are joined by a disulfide bond. Asp1028 acts as the Proton acceptor in catalysis. A phosphotyrosine; by autocatalysis mark is found at Tyr1054, Tyr1059, Tyr1175, and Tyr1214. Residues Ser1231 and Ser1235 each carry the phosphoserine modification. Thr1238 bears the Phosphothreonine mark. Residues Asp1274–Val1318 are disordered. A compositionally biased stretch (polar residues) spans Ser1296 to Tyr1309. Tyr1305, Tyr1309, and Tyr1319 each carry phosphotyrosine; by autocatalysis.

This sequence belongs to the protein kinase superfamily. Tyr protein kinase family. CSF-1/PDGF receptor subfamily. Homodimer in the presence of bound dimeric VEGFA, VEGFC or VEGFD ligands; monomeric in the absence of bound ligands. Can also form heterodimers with FLT1/VEGFR1 and KDR/VEGFR2. Interacts (tyrosine phosphorylated) with LFYN, NCK1, PLCG1. Interacts (tyrosine-phosphorylated active form preferentially) with DAB2IP (via C2 domain and active form preferentially); the interaction occurs at the late phase of VEGFA response and inhibits KDR/VEGFR2 activity. Interacts with SHBSH2D2A/TSAD, GRB2, MYOF, CBL and PDCD6. Interacts (via C-terminus domain) with ERN1 (via kinase domain); the interaction is facilitated in a XBP1 isoform 1- and vascular endothelial growth factor (VEGF)-dependent manner in endothelial cells. Interacts (via juxtamembrane region) with chaperone PDCL3 (via thioredoxin fold region); the interaction leads to increased KDR/VEGFR2 abundance through inhibition of its ubiquitination and degradation. Interacts (tyrosine phosphorylated) with CCDC88A/GIV (via SH2-like region); binding requires autophosphorylation of the KDR/VEGFR2 C-terminal region. Interacts with isoform 2 of BSG. Interacts with SLC31A1; this interaction is induced upon VEGFA stimulation leading to SLC31A1 and KDR subsequent co-internalization to early endosomes, thereby activating KDR downstream signaling in endothelial cells. In terms of assembly, (Microbial infection) Interacts with HIV-1 Tat. In terms of processing, N-glycosylated. Ubiquitinated. Tyrosine phosphorylation of the receptor promotes its poly-ubiquitination, leading to its degradation via the proteasome or lysosomal proteases. Post-translationally, autophosphorylated on tyrosine residues upon ligand binding. Autophosphorylation occurs in trans, i.e. one subunit of the dimeric receptor phosphorylates tyrosine residues on the other subunit. Phosphorylation at Tyr-951 is important for interaction with SH2D2A/TSAD and VEGFA-mediated reorganization of the actin cytoskeleton. Phosphorylation at Tyr-1175 is important for interaction with PLCG1 and SHB. Phosphorylation at Tyr-1214 is important for interaction with NCK1 and FYN. Dephosphorylated by PTPRB. Dephosphorylated by PTPRJ at Tyr-951, Tyr-996, Tyr-1054, Tyr-1059, Tyr-1175 and Tyr-1214. In terms of processing, the inhibitory disulfide bond between Cys-1024 and Cys-1045 may serve as a specific molecular switch for H(2)S-induced modification that regulates KDR/VEGFR2 function. As to expression, detected in cornea (at protein level). Widely expressed.

The protein resides in the cell junction. The protein localises to the endoplasmic reticulum. It is found in the cell membrane. It localises to the cytoplasm. Its subcellular location is the nucleus. The protein resides in the cytoplasmic vesicle. The protein localises to the early endosome. It is found in the secreted. It catalyses the reaction L-tyrosyl-[protein] + ATP = O-phospho-L-tyrosyl-[protein] + ADP + H(+). With respect to regulation, present in an inactive conformation in the absence of bound ligand. Binding of VEGFA, VEGFC or VEGFD leads to dimerization and activation by autophosphorylation on tyrosine residues. Inhibited by the small molecule PTK inhibitor SU5614 ((3Z)-5-Chloro-3-[(3,5-dimethyl-1H-pyrrol-2-yl)methylene]-1,3-dihydro-2H-indol-2-one). May be regulated by hydrogen sulfide (H(2)S) levels via a H(2)S-sensitive intracellular disulfide bond. Tyrosine-protein kinase that acts as a cell-surface receptor for VEGFA, VEGFC and VEGFD. Plays an essential role in the regulation of angiogenesis, vascular development, vascular permeability, and embryonic hematopoiesis. Promotes proliferation, survival, migration and differentiation of endothelial cells. Promotes reorganization of the actin cytoskeleton. Isoforms lacking a transmembrane domain, such as isoform 2 and isoform 3, may function as decoy receptors for VEGFA, VEGFC and/or VEGFD. Isoform 2 plays an important role as negative regulator of VEGFA- and VEGFC-mediated lymphangiogenesis by limiting the amount of free VEGFA and/or VEGFC and preventing their binding to FLT4. Modulates FLT1 and FLT4 signaling by forming heterodimers. Binding of vascular growth factors to isoform 1 leads to the activation of several signaling cascades. Activation of PLCG1 leads to the production of the cellular signaling molecules diacylglycerol and inositol 1,4,5-trisphosphate and the activation of protein kinase C. Mediates activation of MAPK1/ERK2, MAPK3/ERK1 and the MAP kinase signaling pathway, as well as of the AKT1 signaling pathway. Mediates phosphorylation of PIK3R1, the regulatory subunit of phosphatidylinositol 3-kinase, reorganization of the actin cytoskeleton and activation of PTK2/FAK1. Required for VEGFA-mediated induction of NOS2 and NOS3, leading to the production of the signaling molecule nitric oxide (NO) by endothelial cells. Phosphorylates PLCG1. Promotes phosphorylation of FYN, NCK1, NOS3, PIK3R1, PTK2/FAK1 and SRC. The sequence is that of Vascular endothelial growth factor receptor 2 from Homo sapiens (Human).